A 369-amino-acid chain; its full sequence is tRNA-specific 2-thiouridylase MnmA (369 aa).

ATP is bound by residues 11-18 (GMSGGVDS) and M37. Residues 97-99 (NPD) form an interaction with target base in tRNA region. C102 acts as the Nucleophile in catalysis. A disulfide bridge connects residues C102 and C199. Position 127 (G127) interacts with ATP. Residues 149 to 151 (KDQ) are interaction with tRNA. C199 acts as the Cysteine persulfide intermediate in catalysis. The interaction with tRNA stretch occupies residues 311–312 (RY).

The protein belongs to the MnmA/TRMU family. In terms of assembly, interacts with TusE.

It localises to the cytoplasm. The catalysed reaction is S-sulfanyl-L-cysteinyl-[protein] + uridine(34) in tRNA + AH2 + ATP = 2-thiouridine(34) in tRNA + L-cysteinyl-[protein] + A + AMP + diphosphate + H(+). Catalyzes the 2-thiolation of uridine at the wobble position (U34) of tRNA(Lys), tRNA(Glu) and tRNA(Gln), leading to the formation of s(2)U34, the first step of tRNA-mnm(5)s(2)U34 synthesis. Sulfur is provided by IscS, via a sulfur-relay system. Binds ATP and its substrate tRNAs. This is tRNA-specific 2-thiouridylase MnmA from Enterobacter sp. (strain 638).